A 299-amino-acid polypeptide reads, in one-letter code: tRNA pseudouridine synthase B (299 aa).

Asp-38 (nucleophile) is an active-site residue.

This sequence belongs to the pseudouridine synthase TruB family. Type 1 subfamily.

It catalyses the reaction uridine(55) in tRNA = pseudouridine(55) in tRNA. Functionally, responsible for synthesis of pseudouridine from uracil-55 in the psi GC loop of transfer RNAs. This Pediococcus pentosaceus (strain ATCC 25745 / CCUG 21536 / LMG 10740 / 183-1w) protein is tRNA pseudouridine synthase B.